The following is a 443-amino-acid chain: MYGDHRQIWERIVEVIKSELTPTSYNTWLVHIKPLAIIDDVLFLSTPNTFTKNIINGRYINIIYDAASKATNKLYEIKILSEDEEEYREIKESIEKENLTESTTLSTLNPKYTFDTFVVGNSNKLAHAACLAVAQAPAKAYNPLFIYGGVGLGKTHLMHAIGHFINKHQSGYKIMYVTSETFTNELVNSIKDDKNEEFRNKYRNIDVLLIDDIQFIAKKERTQEEFFHTFNTLYEANKQIVISSDRPPKEIPTLEERLRSRFEWGLIADIQPPDYETRIAILKKKAQTENLNIPDEVLAYVAEKIQSNIRELEGALIRIVAFSNLTKANIDLELAKHALKEIVSNKTREITVKLIQEEVCKYYNIKLEDFRSRKRTKNIAYPRQIAMYLARELTDLSLPKIGEEFGKDHTTVIHAYEKISNEIKQDELLSRQIEELKKRIKGY.

The domain I, interacts with DnaA modulators stretch occupies residues 1–73 (MYGDHRQIWE…YDAASKATNK (73 aa)). A domain II region spans residues 73–106 (KLYEIKILSEDEEEYREIKESIEKENLTESTTLS). Positions 107–323 (TLNPKYTFDT…GALIRIVAFS (217 aa)) are domain III, AAA+ region. G151, G153, K154, and T155 together coordinate ATP. The tract at residues 324–443 (NLTKANIDLE…EELKKRIKGY (120 aa)) is domain IV, binds dsDNA.

It belongs to the DnaA family. In terms of assembly, oligomerizes as a right-handed, spiral filament on DNA at oriC.

It is found in the cytoplasm. Functionally, plays an essential role in the initiation and regulation of chromosomal replication. ATP-DnaA binds to the origin of replication (oriC) to initiate formation of the DNA replication initiation complex once per cell cycle. Binds the DnaA box (a 9 base pair repeat at the origin) and separates the double-stranded (ds)DNA. Forms a right-handed helical filament on oriC DNA; dsDNA binds to the exterior of the filament while single-stranded (ss)DNA is stabiized in the filament's interior. The ATP-DnaA-oriC complex binds and stabilizes one strand of the AT-rich DNA unwinding element (DUE), permitting loading of DNA polymerase. After initiation quickly degrades to an ADP-DnaA complex that is not apt for DNA replication. Binds acidic phospholipids. The polypeptide is Chromosomal replication initiator protein DnaA (Thermoanaerobacter pseudethanolicus (strain ATCC 33223 / 39E) (Clostridium thermohydrosulfuricum)).